The sequence spans 1038 residues: Translation initiation factor IF-2 (1038 aa).

The tract at residues 32–442 (GSALASLSDE…RKGVNTAAPR (411 aa)) is disordered. 3 stretches are compositionally biased toward low complexity: residues 65-77 (PPTKDTPTAPVAP), 100-113 (PAEAADNPNAPAQP), and 131-147 (PKLAPAPEAKAPEAPAA). 2 stretches are compositionally biased toward basic and acidic residues: residues 204 to 217 (SGGRKAPESPKRES) and 275 to 295 (RSLDRSRNRPEEAAKAGDAGK). Low complexity predominate over residues 311 to 328 (PSAPAKPAAPTGSSGPAA). Basic and acidic residues predominate over residues 331-344 (PDIKLTRDVIEGHK). Residues 422–435 (HHYRRSRPRIRRKG) show a composition bias toward basic residues. Residues 529 to 696 (ARPPVVTFLG…TLLTIAELNE (168 aa)) form the tr-type G domain. The tract at residues 538-545 (GHVDHGKT) is G1. 538–545 (GHVDHGKT) contacts GTP. The tract at residues 563–567 (GITQH) is G2. Residues 584-587 (DTPG) form a G3 region. GTP is bound by residues 584-588 (DTPGH) and 638-641 (NKID). The tract at residues 638-641 (NKID) is G4. The tract at residues 674–676 (SAT) is G5.

It belongs to the TRAFAC class translation factor GTPase superfamily. Classic translation factor GTPase family. IF-2 subfamily.

The protein resides in the cytoplasm. One of the essential components for the initiation of protein synthesis. Protects formylmethionyl-tRNA from spontaneous hydrolysis and promotes its binding to the 30S ribosomal subunits. Also involved in the hydrolysis of GTP during the formation of the 70S ribosomal complex. In Rhodopirellula baltica (strain DSM 10527 / NCIMB 13988 / SH1), this protein is Translation initiation factor IF-2.